A 543-amino-acid polypeptide reads, in one-letter code: MMFGGYETIEAYEDDLYRDESSSELSVDSEVEFQLYSQIHYAQDLDDVIREEEHEEKNSGNSESSSSKPNQKKLIVLSDSEVIQLSDGSEVITLSDEDSIYRCKGKNVRVQAQENAHGLSSSLQSNELVDKKCKSDIEKPKSEERSGVIREVMIIEVSSSEEEESTISEGDNVESWMLLGCEVDDKDDDILLNLVGCENSVTEGEDGINWSISDKDIEAQIANNRTPGRWTQRYYSANKNIICRNCDKRGHLSKNCPLPRKVRRCFLCSRRGHLLYSCPAPLCEYCPVPKMLDHSCLFRHSWDKQCDRCHMLGHYTDACTEIWRQYHLTTKPGPPKKPKTPSRPSALAYCYHCAQKGHYGHECPEREVYDPSPVSPFICYYDDKYEIQEREKRLKQKIKVLKKNGVIPEPSKLPYIKAANENPHHDIRKGRASWKSNRWPQENKETQKEMKNKNRNWEKHRKADRHREVDEDFPRGPKTYSSPGSFKTQKPSKPFHRSSHYHTSREDKSPKEGKRGKQKKKERCWEDDDNDNLFLIKQRKKKS.

The tract at residues 51 to 71 (EEEHEEKNSGNSESSSSKPNQ) is disordered. The segment covering 59 to 68 (SGNSESSSSK) has biased composition (low complexity). Residues Lys131, Lys139, Lys141, Lys239, and Lys254 each participate in a glycyl lysine isopeptide (Lys-Gly) (interchain with G-Cter in SUMO2) cross-link. CCHC-type zinc fingers lie at residues 241 to 258 (IICR…NCPL), 263 to 280 (RRCF…SCPA), and 304 to 321 (KQCD…ACTE). Lys339 participates in a covalent cross-link: Glycyl lysine isopeptide (Lys-Gly) (interchain with G-Cter in SUMO2). The segment at 348 to 365 (AYCYHCAQKGHYGHECPE) adopts a CCHC-type 4 zinc-finger fold. Residues Lys412, Lys417, and Lys435 each participate in a glycyl lysine isopeptide (Lys-Gly) (interchain with G-Cter in SUMO2) cross-link. The disordered stretch occupies residues 414–543 (PYIKAANENP…FLIKQRKKKS (130 aa)). 2 stretches are compositionally biased toward basic and acidic residues: residues 441 to 457 (QENK…NRNW) and 465 to 475 (RHREVDEDFPR). Lys478 participates in a covalent cross-link: Glycyl lysine isopeptide (Lys-Gly) (interchain with G-Cter in SUMO2). A compositionally biased stretch (polar residues) spans 479-491 (TYSSPGSFKTQKP). Phosphoserine occurs at positions 482 and 485. Residues Lys487, Lys490, and Lys493 each participate in a glycyl lysine isopeptide (Lys-Gly) (interchain with G-Cter in SUMO2) cross-link. Over residues 493-502 (KPFHRSSHYH) the composition is skewed to basic residues. The span at 503–515 (TSREDKSPKEGKR) shows a compositional bias: basic and acidic residues. Lys537 is covalently cross-linked (Glycyl lysine isopeptide (Lys-Gly) (interchain with G-Cter in SUMO2)).

Component of a nucleolar TRAMP-like complex, an ATP-dependent exosome regulatory complex consisting of a helicase (MTREX), an oligadenylate polymerase (TENT4B or TENT4A), and a substrate specific RNA-binding factor (ZCCHC7 or ZCCHC8). Several TRAMP-like complexes exist with specific compositions and are associated with nuclear, or nucleolar RNA exosomes.

The protein localises to the nucleus. The protein resides in the nucleolus. The sequence is that of Zinc finger CCHC domain-containing protein 7 (ZCCHC7) from Homo sapiens (Human).